We begin with the raw amino-acid sequence, 57 residues long: Protein GnsB (57 aa).

It belongs to the gns family.

Overexpression increases levels of unsaturated fatty acids and suppresses both the temperature-sensitive fabA6 mutation and cold-sensitive secG null mutation. The protein is Protein GnsB (gnsB) of Escherichia coli (strain K12).